The chain runs to 192 residues: METGRPNLFFVGLMGAGKTTVGRTVARRLHYPFFDSDHELEAHCGVRIPVIFEHEGEEGFRDREAAMIRELTGRSGIVLATGGGAVLRPENRELLKSRGTVVYLRASPHDLWLRTRHDRNRPLLQTEDPKGKLEALYGARDPLYREVADFIIETGKPSVAQLANMVLMQLEMAGFRIDTAAASDQPANDTHS.

15-20 (GAGKTT) provides a ligand contact to ATP. Thr-19 contributes to the Mg(2+) binding site. Asp-37, Arg-61, and Gly-83 together coordinate substrate. Arg-121 serves as a coordination point for ATP. Arg-140 contributes to the substrate binding site.

It belongs to the shikimate kinase family. As to quaternary structure, monomer. Mg(2+) is required as a cofactor.

The protein localises to the cytoplasm. It catalyses the reaction shikimate + ATP = 3-phosphoshikimate + ADP + H(+). It functions in the pathway metabolic intermediate biosynthesis; chorismate biosynthesis; chorismate from D-erythrose 4-phosphate and phosphoenolpyruvate: step 5/7. Catalyzes the specific phosphorylation of the 3-hydroxyl group of shikimic acid using ATP as a cosubstrate. The sequence is that of Shikimate kinase from Cupriavidus pinatubonensis (strain JMP 134 / LMG 1197) (Cupriavidus necator (strain JMP 134)).